A 128-amino-acid chain; its full sequence is Probable 4-amino-4-deoxy-L-arabinose-phosphoundecaprenol flippase subunit ArnF (128 aa).

At 1–2 (MC) the chain is on the cytoplasmic side. The helical transmembrane segment at 3–23 (LIWGLFSVIIASVAQLSLGFA) threads the bilayer. At 24–35 (ASHLPPMTHLWD) the chain is on the periplasmic side. The helical transmembrane segment at 36 to 56 (FIAALLAFGLDARILLLGLLG) threads the bilayer. The Cytoplasmic segment spans residues 57 to 76 (YLLSVFCWYKTLHKLALSKA). Residues 77 to 97 (YALLSMSYVLVWIASMVLPGW) traverse the membrane as a helical segment. Topologically, residues 98–100 (EGT) are periplasmic. A helical transmembrane segment spans residues 101–121 (FSLKALLGVACIMSGLMLIFL). Residues 122–128 (PTTKQRY) are Cytoplasmic-facing.

The protein belongs to the ArnF family. In terms of assembly, heterodimer of ArnE and ArnF.

The protein resides in the cell inner membrane. It participates in bacterial outer membrane biogenesis; lipopolysaccharide biosynthesis. Its function is as follows. Translocates 4-amino-4-deoxy-L-arabinose-phosphoundecaprenol (alpha-L-Ara4N-phosphoundecaprenol) from the cytoplasmic to the periplasmic side of the inner membrane. This Shigella flexneri protein is Probable 4-amino-4-deoxy-L-arabinose-phosphoundecaprenol flippase subunit ArnF.